Consider the following 196-residue polypeptide: Putative 3-methyladenine DNA glycosylase (196 aa).

This sequence belongs to the DNA glycosylase MPG family.

In Bacillus velezensis (strain DSM 23117 / BGSC 10A6 / LMG 26770 / FZB42) (Bacillus amyloliquefaciens subsp. plantarum), this protein is Putative 3-methyladenine DNA glycosylase.